Reading from the N-terminus, the 121-residue chain is Large ribosomal subunit protein uL18 (121 aa).

It belongs to the universal ribosomal protein uL18 family. In terms of assembly, part of the 50S ribosomal subunit; part of the 5S rRNA/L5/L18/L25 subcomplex. Contacts the 5S and 23S rRNAs.

This is one of the proteins that bind and probably mediate the attachment of the 5S RNA into the large ribosomal subunit, where it forms part of the central protuberance. The chain is Large ribosomal subunit protein uL18 from Paracidovorax citrulli (strain AAC00-1) (Acidovorax citrulli).